The chain runs to 123 residues: Small ribosomal subunit protein bS16 (123 aa).

A disordered region spans residues 79–123; sequence AGIAKRPSRNNPTKGEPGKKAQERLALAKQAEEEAAAKAAEAASE.

The protein belongs to the bacterial ribosomal protein bS16 family.

The sequence is that of Small ribosomal subunit protein bS16 from Brucella melitensis biotype 2 (strain ATCC 23457).